The following is a 280-amino-acid chain: Transcription factor HES-1 (280 aa).

The interval 1-44 (MPADIMEKNSSSPVAATPASVNTTPDKPKTASEHRKSSKPIMEK) is disordered. Over residues 10–21 (SSSPVAATPASV) the composition is skewed to low complexity. Basic and acidic residues predominate over residues 26 to 35 (DKPKTASEHR). The region spanning 34-91 (HRKSSKPIMEKRRRARINESLSQLKTLILDALKKDSSRHSKLEKADILEMTVKHLRNL) is the bHLH domain. In terms of domain architecture, Orange spans 110-143 (YRAGFSECMNEVTRFLSTCEGVNTEVRTRLLGHL). Disordered stretches follow at residues 157-200 (GQPH…PPGG) and 254-280 (TSVGPNAVSPSSGPSLTADSMWRPWRN). 2 stretches are compositionally biased toward pro residues: residues 164–174 (QAPPPPPPGPG) and 181–200 (FAPPPPLVPIPGGAAPPPGG). Over residues 254 to 271 (TSVGPNAVSPSSGPSLTA) the composition is skewed to polar residues. A WRPW motif motif is present at residues 275–278 (WRPW).

In terms of assembly, transcription repression requires formation of a complex with a corepressor protein of the Groucho/TLE family. Interacts (via WPRW motif) with TLE1, and more weakly with TLE2. Interacts with HES6. Interacts with SIRT1. Interacts with an FA complex, composed of FANCA, FANCF, FANCG and FANCL, but not of FANCC, nor FANCE. In terms of processing, (Microbial infection) Ubiquitinated via human cytomegalovirus/HCMV protein IE1 that assembles a HES1 ubiquitination complex; leading to HES1 proteasomal degradation.

It localises to the nucleus. Functionally, transcriptional repressor of genes that require a bHLH protein for their transcription. May act as a negative regulator of myogenesis by inhibiting the functions of MYOD1 and ASH1. Binds DNA on N-box motifs: 5'-CACNAG-3' with high affinity and on E-box motifs: 5'-CANNTG-3' with low affinity. May play a role in a functional FA core complex response to DNA cross-link damage, being required for the stability and nuclear localization of FA core complex proteins, as well as for FANCD2 monoubiquitination in response to DNA damage. The polypeptide is Transcription factor HES-1 (HES1) (Homo sapiens (Human)).